Here is a 256-residue protein sequence, read N- to C-terminus: H-2 class II histocompatibility antigen, A-D alpha chain (256 aa).

Residues 1–23 (MPCSRALILGVLALNTMLSLCGG) form the signal peptide. An alpha-1 region spans residues 24–111 (EDDIEADHVG…KRSNFTPATN (88 aa)). Over 24 to 218 (EDDIEADHVG…IPAPMSELTE (195 aa)) the chain is Extracellular. Positions 112–205 (EAPQATVFPK…GLEEPVLKHW (94 aa)) are alpha-2. The 93-residue stretch at 114-206 (PQATVFPKSP…LEEPVLKHWE (93 aa)) folds into the Ig-like C1-type domain. Cysteines 134 and 190 form a disulfide. Residue N145 is glycosylated (N-linked (GlcNAc...) asparagine). The interval 206-218 (EPEIPAPMSELTE) is connecting peptide. A helical membrane pass occupies residues 219–244 (TVVCALGLSVGLVGIVVGTIFIIQGL). Topologically, residues 245 to 256 (RSGGTSRHPGPL) are cytoplasmic.

This sequence belongs to the MHC class II family.

The protein resides in the membrane. In Mus musculus (Mouse), this protein is H-2 class II histocompatibility antigen, A-D alpha chain (H2-Aa).